Reading from the N-terminus, the 209-residue chain is 60S ribosomal subunit assembly/export protein loc-1 (209 aa).

2 disordered regions span residues 1-53 (MAPT…SKGR) and 135-209 (REAR…AAPE). Basic and acidic residues-rich tracts occupy residues 20-33 (GSKD…DGVL) and 135-159 (REAR…TKDS). Residues 126–170 (IKARQMEEIREARRAEAEKKEAERKARLEETKDSLRKKRKRSKQS) adopt a coiled-coil conformation.

This sequence belongs to the LOC1 family. As to quaternary structure, component of the 66S pre-ribosomal particle.

The protein resides in the nucleus. It localises to the nucleolus. In terms of biological role, required for efficient assembly and nuclear export of the 60S ribosomal subunit. The chain is 60S ribosomal subunit assembly/export protein loc-1 (loc-1) from Neurospora crassa (strain ATCC 24698 / 74-OR23-1A / CBS 708.71 / DSM 1257 / FGSC 987).